We begin with the raw amino-acid sequence, 495 residues long: Glycerol kinase (495 aa).

An ADP-binding site is contributed by Thr-14. ATP contacts are provided by Thr-14, Thr-15, and Ser-16. Thr-14 serves as a coordination point for sn-glycerol 3-phosphate. Arg-18 contacts ADP. 4 residues coordinate sn-glycerol 3-phosphate: Arg-84, Glu-85, Tyr-136, and Asp-246. Arg-84, Glu-85, Tyr-136, Asp-246, and Gln-247 together coordinate glycerol. Positions 268 and 312 each coordinate ADP. ATP contacts are provided by Thr-268, Gly-312, Gln-316, and Gly-413. Positions 413 and 417 each coordinate ADP.

It belongs to the FGGY kinase family.

It carries out the reaction glycerol + ATP = sn-glycerol 3-phosphate + ADP + H(+). It participates in polyol metabolism; glycerol degradation via glycerol kinase pathway; sn-glycerol 3-phosphate from glycerol: step 1/1. With respect to regulation, inhibited by fructose 1,6-bisphosphate (FBP). Functionally, key enzyme in the regulation of glycerol uptake and metabolism. Catalyzes the phosphorylation of glycerol to yield sn-glycerol 3-phosphate. The protein is Glycerol kinase of Bdellovibrio bacteriovorus (strain ATCC 15356 / DSM 50701 / NCIMB 9529 / HD100).